The following is a 200-amino-acid chain: Probable nicotinate-nucleotide adenylyltransferase (200 aa).

Belongs to the NadD family.

It catalyses the reaction nicotinate beta-D-ribonucleotide + ATP + H(+) = deamido-NAD(+) + diphosphate. Its pathway is cofactor biosynthesis; NAD(+) biosynthesis; deamido-NAD(+) from nicotinate D-ribonucleotide: step 1/1. Its function is as follows. Catalyzes the reversible adenylation of nicotinate mononucleotide (NaMN) to nicotinic acid adenine dinucleotide (NaAD). This is Probable nicotinate-nucleotide adenylyltransferase from Clostridium novyi (strain NT).